A 276-amino-acid polypeptide reads, in one-letter code: Krueppel homolog 2 (276 aa).

Residues 1–37 (MSAPTDQPPRSEGAQTNSSERSSQQQEQPQQSQSQNV) are disordered. The segment covering 18-35 (SSERSSQQQEQPQQSQSQ) has biased composition (low complexity). Phosphoserine is present on Ser-22. 3 helical membrane-spanning segments follow: residues 53–73 (ALWA…LPIF), 125–145 (LIFF…LYSV), and 181–201 (ILKA…VLAF).

The protein belongs to the PER33/POM33 family.

It localises to the membrane. Functionally, member of the dosage-dependent hierarchy effective upon white gene expression. The sequence is that of Krueppel homolog 2 (Kr-h2) from Drosophila melanogaster (Fruit fly).